A 74-amino-acid chain; its full sequence is MAVFEKVQEIIVEELGKETEEVTLETTFDDLDADSLDVFQVISEIEDAFDIQIETEEGLNTVGDLVAYVEEKSK.

The Carrier domain maps to Met1–Ser73. The residue at position 35 (Ser35) is an O-(pantetheine 4'-phosphoryl)serine.

The protein belongs to the acyl carrier protein (ACP) family. In terms of processing, 4'-phosphopantetheine is transferred from CoA to a specific serine of apo-ACP by AcpS. This modification is essential for activity because fatty acids are bound in thioester linkage to the sulfhydryl of the prosthetic group.

It localises to the cytoplasm. It participates in lipid metabolism; fatty acid biosynthesis. Carrier of the growing fatty acid chain in fatty acid biosynthesis. This chain is Acyl carrier protein, found in Streptococcus pyogenes serotype M1.